Reading from the N-terminus, the 280-residue chain is uncharacterized protein (280 aa).

CBS domains are found at residues 10-67 (QNKK…GSKY), 90-146 (MEEN…KIDE), 154-209 (ITRD…DWAF), and 229-280 (MKRD…KYFA).

This is an uncharacterized protein from Methanocaldococcus jannaschii (strain ATCC 43067 / DSM 2661 / JAL-1 / JCM 10045 / NBRC 100440) (Methanococcus jannaschii).